Here is a 103-residue protein sequence, read N- to C-terminus: Large ribosomal subunit protein uL24 (103 aa).

Residues Tyr70–Asn103 are disordered.

This sequence belongs to the universal ribosomal protein uL24 family. As to quaternary structure, part of the 50S ribosomal subunit.

Its function is as follows. One of two assembly initiator proteins, it binds directly to the 5'-end of the 23S rRNA, where it nucleates assembly of the 50S subunit. One of the proteins that surrounds the polypeptide exit tunnel on the outside of the subunit. In Lactiplantibacillus plantarum (strain ATCC BAA-793 / NCIMB 8826 / WCFS1) (Lactobacillus plantarum), this protein is Large ribosomal subunit protein uL24.